Consider the following 165-residue polypeptide: MALNLQDKQAIVAEVSEVAKGALSAVVADSRGVTVDKMTELRKAGREAGVYMRVVRNTLLRRVVEGTPFECLKDTFVGPTLIAYSMEHPGAAARLFKEFAKANAKFEVKAAAFEGELIPASQIDRLATLPTYEEAIARLMATMKEASAGKLVRTLAAVRDAKEAA.

Belongs to the universal ribosomal protein uL10 family. Part of the ribosomal stalk of the 50S ribosomal subunit. The N-terminus interacts with L11 and the large rRNA to form the base of the stalk. The C-terminus forms an elongated spine to which L12 dimers bind in a sequential fashion forming a multimeric L10(L12)X complex.

Its function is as follows. Forms part of the ribosomal stalk, playing a central role in the interaction of the ribosome with GTP-bound translation factors. The sequence is that of Large ribosomal subunit protein uL10 from Citrobacter koseri (strain ATCC BAA-895 / CDC 4225-83 / SGSC4696).